The sequence spans 465 residues: CCA-adding enzyme (465 aa).

ATP contacts are provided by S63 and K66. 2 residues coordinate CTP: S63 and K66. The Mg(2+) site is built by E75, D77, and D127. 3 residues coordinate ATP: H149, K171, and Y180. Residues H149, K171, and Y180 each coordinate CTP.

It belongs to the tRNA nucleotidyltransferase/poly(A) polymerase family. Archaeal CCA-adding enzyme subfamily. As to quaternary structure, homodimer. Mg(2+) serves as cofactor.

The catalysed reaction is a tRNA precursor + 2 CTP + ATP = a tRNA with a 3' CCA end + 3 diphosphate. It carries out the reaction a tRNA with a 3' CCA end + 2 CTP + ATP = a tRNA with a 3' CCACCA end + 3 diphosphate. Functionally, catalyzes the addition and repair of the essential 3'-terminal CCA sequence in tRNAs without using a nucleic acid template. Adds these three nucleotides in the order of C, C, and A to the tRNA nucleotide-73, using CTP and ATP as substrates and producing inorganic pyrophosphate. tRNA 3'-terminal CCA addition is required both for tRNA processing and repair. Also involved in tRNA surveillance by mediating tandem CCA addition to generate a CCACCA at the 3' terminus of unstable tRNAs. While stable tRNAs receive only 3'-terminal CCA, unstable tRNAs are marked with CCACCA and rapidly degraded. This chain is CCA-adding enzyme, found in Aeropyrum pernix (strain ATCC 700893 / DSM 11879 / JCM 9820 / NBRC 100138 / K1).